Reading from the N-terminus, the 145-residue chain is Hydrophobin-like protein 1 (145 aa).

A signal peptide spans 1–20 (MYLLQISISLLLLISTAATA). The N-linked (GlcNAc...) asparagine glycan is linked to asparagine 36. 4 disulfides stabilise this stretch: cysteine 61-cysteine 121, cysteine 71-cysteine 113, cysteine 72-cysteine 104, and cysteine 122-cysteine 139.

Its subcellular location is the secreted. The protein resides in the cell wall. Aerial growth, conidiation, and dispersal of filamentous fungi in the environment rely upon a capability of their secreting small amphipathic proteins called hydrophobins (HPBs) with low sequence identity. Class I can self-assemble into an outermost layer of rodlet bundles on aerial cell surfaces, conferring cellular hydrophobicity that supports fungal growth, development and dispersal; whereas Class II form highly ordered films at water-air interfaces through intermolecular interactions but contribute nothing to the rodlet structure. In Botryotinia fuckeliana, hydrophobins are not involved in conferring surface hydrophobicity to conidia and aerial hyphae and their function in sclerotia and fruiting bodies remains to be investigated. The chain is Hydrophobin-like protein 1 from Botryotinia fuckeliana (strain B05.10) (Noble rot fungus).